A 787-amino-acid chain; its full sequence is Protein translocase subunit SecA (787 aa).

ATP contacts are provided by residues Q85, 103 to 107 (GEGKT), and D492.

This sequence belongs to the SecA family. In terms of assembly, monomer and homodimer. Part of the essential Sec protein translocation apparatus which comprises SecA, SecYEG and auxiliary proteins SecDF. Other proteins may also be involved.

The protein resides in the cell membrane. It is found in the cytoplasm. The enzyme catalyses ATP + H2O + cellular proteinSide 1 = ADP + phosphate + cellular proteinSide 2.. Part of the Sec protein translocase complex. Interacts with the SecYEG preprotein conducting channel. Has a central role in coupling the hydrolysis of ATP to the transfer of proteins into and across the cell membrane, serving as an ATP-driven molecular motor driving the stepwise translocation of polypeptide chains across the membrane. The polypeptide is Protein translocase subunit SecA (Lacticaseibacillus casei (strain BL23) (Lactobacillus casei)).